Reading from the N-terminus, the 422-residue chain is MDQIVIRGGVPLHGAIPIAGAKNACLTLMPATLLSDEPLTLTNAPRLSDIATMTALLRSLGAEVSTLQDGKVLALSSHRIDNHTAEYDIVRKMRASILVLGPMLARDGHAVVSLPGGCAIGARPVDLHLKGLEALGADLTLTDGYVHAKAPGGLKGAVFEFPFVSVGATENILMAATLAKGTTVLKNAAREPEIVDLARCLRKMGAQIEGEGTSRITVQGVDRLHGATHPVVTDRIELGTYMLAPAITGGEVELIGGRLDLVAAFAERLAAAGVDVSETAHGLTVKRANGRVGAVDVVTEPFPGFPTDLQAQMMALLCTADGVSVLEERIFENRFMHAPELIRMGARIDVHGGTATVTGVPQLKGAPVMATDLRASVSLILAALAAEGETVVSRVYHLDRGYERVEEKLSACGAQIERVKET.

Residue K22 to N23 participates in phosphoenolpyruvate binding. A UDP-N-acetyl-alpha-D-glucosamine-binding site is contributed by R94. Residue C118 is the Proton donor of the active site. The residue at position 118 (C118) is a 2-(S-cysteinyl)pyruvic acid O-phosphothioketal. Residues R123–L127, D308, and I330 contribute to the UDP-N-acetyl-alpha-D-glucosamine site.

This sequence belongs to the EPSP synthase family. MurA subfamily.

The protein resides in the cytoplasm. It carries out the reaction phosphoenolpyruvate + UDP-N-acetyl-alpha-D-glucosamine = UDP-N-acetyl-3-O-(1-carboxyvinyl)-alpha-D-glucosamine + phosphate. Its pathway is cell wall biogenesis; peptidoglycan biosynthesis. Its function is as follows. Cell wall formation. Adds enolpyruvyl to UDP-N-acetylglucosamine. The chain is UDP-N-acetylglucosamine 1-carboxyvinyltransferase from Dinoroseobacter shibae (strain DSM 16493 / NCIMB 14021 / DFL 12).